Reading from the N-terminus, the 549-residue chain is Glucose-6-phosphate isomerase (549 aa).

Catalysis depends on E353, which acts as the Proton donor. Catalysis depends on residues H384 and K513.

Belongs to the GPI family.

It localises to the cytoplasm. The enzyme catalyses alpha-D-glucose 6-phosphate = beta-D-fructose 6-phosphate. It functions in the pathway carbohydrate biosynthesis; gluconeogenesis. The protein operates within carbohydrate degradation; glycolysis; D-glyceraldehyde 3-phosphate and glycerone phosphate from D-glucose: step 2/4. Its function is as follows. Catalyzes the reversible isomerization of glucose-6-phosphate to fructose-6-phosphate. This Brucella canis (strain ATCC 23365 / NCTC 10854 / RM-666) protein is Glucose-6-phosphate isomerase.